The sequence spans 98 residues: Aspartyl/glutamyl-tRNA(Asn/Gln) amidotransferase subunit C (98 aa).

The tract at residues 75–98 is disordered; the sequence is EQALSGAPDSDDNRFKVPAILDEA.

It belongs to the GatC family. Heterotrimer of A, B and C subunits.

The catalysed reaction is L-glutamyl-tRNA(Gln) + L-glutamine + ATP + H2O = L-glutaminyl-tRNA(Gln) + L-glutamate + ADP + phosphate + H(+). It catalyses the reaction L-aspartyl-tRNA(Asn) + L-glutamine + ATP + H2O = L-asparaginyl-tRNA(Asn) + L-glutamate + ADP + phosphate + 2 H(+). Functionally, allows the formation of correctly charged Asn-tRNA(Asn) or Gln-tRNA(Gln) through the transamidation of misacylated Asp-tRNA(Asn) or Glu-tRNA(Gln) in organisms which lack either or both of asparaginyl-tRNA or glutaminyl-tRNA synthetases. The reaction takes place in the presence of glutamine and ATP through an activated phospho-Asp-tRNA(Asn) or phospho-Glu-tRNA(Gln). The sequence is that of Aspartyl/glutamyl-tRNA(Asn/Gln) amidotransferase subunit C from Pseudarthrobacter chlorophenolicus (strain ATCC 700700 / DSM 12829 / CIP 107037 / JCM 12360 / KCTC 9906 / NCIMB 13794 / A6) (Arthrobacter chlorophenolicus).